Consider the following 207-residue polypeptide: Na(+)-translocating NADH-quinone reductase subunit D (207 aa).

The next 6 membrane-spanning stretches (helical) occupy residues Ile-20–Ala-40, Phe-41–Ile-61, Ile-69–Leu-89, Val-102–Met-122, Phe-130–Leu-150, and Asn-177–Ile-197.

It belongs to the NqrDE/RnfAE family. As to quaternary structure, composed of six subunits; NqrA, NqrB, NqrC, NqrD, NqrE and NqrF.

The protein localises to the cell inner membrane. It carries out the reaction a ubiquinone + n Na(+)(in) + NADH + H(+) = a ubiquinol + n Na(+)(out) + NAD(+). Its function is as follows. NQR complex catalyzes the reduction of ubiquinone-1 to ubiquinol by two successive reactions, coupled with the transport of Na(+) ions from the cytoplasm to the periplasm. NqrA to NqrE are probably involved in the second step, the conversion of ubisemiquinone to ubiquinol. The polypeptide is Na(+)-translocating NADH-quinone reductase subunit D (Haemophilus ducreyi (strain 35000HP / ATCC 700724)).